The chain runs to 233 residues: Purine nucleoside phosphorylase DeoD-type (233 aa).

Histidine 4 contacts a purine D-ribonucleoside. Phosphate-binding positions include glycine 20, arginine 24, arginine 43, and arginine 87–serine 90. A purine D-ribonucleoside is bound by residues glutamate 178 to glutamate 180 and serine 202 to aspartate 203. Residue aspartate 203 is the Proton donor of the active site.

It belongs to the PNP/UDP phosphorylase family. In terms of assembly, homohexamer; trimer of homodimers.

It carries out the reaction a purine D-ribonucleoside + phosphate = a purine nucleobase + alpha-D-ribose 1-phosphate. It catalyses the reaction a purine 2'-deoxy-D-ribonucleoside + phosphate = a purine nucleobase + 2-deoxy-alpha-D-ribose 1-phosphate. Its function is as follows. Catalyzes the reversible phosphorolytic breakdown of the N-glycosidic bond in the beta-(deoxy)ribonucleoside molecules, with the formation of the corresponding free purine bases and pentose-1-phosphate. This chain is Purine nucleoside phosphorylase DeoD-type, found in Bacillus subtilis (strain 168).